We begin with the raw amino-acid sequence, 632 residues long: 1-deoxy-D-xylulose-5-phosphate synthase (632 aa).

Thiamine diphosphate is bound by residues His77 and 118 to 120 (GHS). Asp149 contributes to the Mg(2+) binding site. Thiamine diphosphate-binding positions include 150-151 (GA), Asn178, Tyr289, and Glu372. Asn178 serves as a coordination point for Mg(2+).

This sequence belongs to the transketolase family. DXPS subfamily. In terms of assembly, homodimer. Mg(2+) serves as cofactor. Requires thiamine diphosphate as cofactor.

The enzyme catalyses D-glyceraldehyde 3-phosphate + pyruvate + H(+) = 1-deoxy-D-xylulose 5-phosphate + CO2. It functions in the pathway metabolic intermediate biosynthesis; 1-deoxy-D-xylulose 5-phosphate biosynthesis; 1-deoxy-D-xylulose 5-phosphate from D-glyceraldehyde 3-phosphate and pyruvate: step 1/1. Functionally, catalyzes the acyloin condensation reaction between C atoms 2 and 3 of pyruvate and glyceraldehyde 3-phosphate to yield 1-deoxy-D-xylulose-5-phosphate (DXP). The protein is 1-deoxy-D-xylulose-5-phosphate synthase of Listeria innocua serovar 6a (strain ATCC BAA-680 / CLIP 11262).